The sequence spans 389 residues: tRNA-specific 2-thiouridylase MnmA (389 aa).

ATP is bound by residues 34-41 (AMSGGVDS) and leucine 60. Cysteine 128 serves as the catalytic Nucleophile. Cysteine 128 and cysteine 225 are joined by a disulfide. Glycine 152 lines the ATP pocket. An interaction with tRNA region spans residues 174-176 (RDQ). The active-site Cysteine persulfide intermediate is the cysteine 225.

Belongs to the MnmA/TRMU family.

The protein localises to the cytoplasm. The catalysed reaction is S-sulfanyl-L-cysteinyl-[protein] + uridine(34) in tRNA + AH2 + ATP = 2-thiouridine(34) in tRNA + L-cysteinyl-[protein] + A + AMP + diphosphate + H(+). Functionally, catalyzes the 2-thiolation of uridine at the wobble position (U34) of tRNA, leading to the formation of s(2)U34. This Paracoccus denitrificans (strain Pd 1222) protein is tRNA-specific 2-thiouridylase MnmA.